The chain runs to 394 residues: 8-amino-7-oxononanoate synthase (394 aa).

Residue arginine 21 participates in substrate binding. 112-113 (GY) provides a ligand contact to pyridoxal 5'-phosphate. Residue histidine 137 coordinates substrate. Pyridoxal 5'-phosphate contacts are provided by serine 183, histidine 211, and threonine 239. Lysine 242 carries the post-translational modification N6-(pyridoxal phosphate)lysine. Substrate is bound at residue threonine 358.

It belongs to the class-II pyridoxal-phosphate-dependent aminotransferase family. BioF subfamily. In terms of assembly, homodimer. Requires pyridoxal 5'-phosphate as cofactor.

The catalysed reaction is 6-carboxyhexanoyl-[ACP] + L-alanine + H(+) = (8S)-8-amino-7-oxononanoate + holo-[ACP] + CO2. Its pathway is cofactor biosynthesis; biotin biosynthesis. Functionally, catalyzes the decarboxylative condensation of pimeloyl-[acyl-carrier protein] and L-alanine to produce 8-amino-7-oxononanoate (AON), [acyl-carrier protein], and carbon dioxide. In Paraburkholderia phymatum (strain DSM 17167 / CIP 108236 / LMG 21445 / STM815) (Burkholderia phymatum), this protein is 8-amino-7-oxononanoate synthase.